The primary structure comprises 211 residues: Proteasome subunit beta (211 aa).

The propeptide at 1–9 is removed in mature form; by autocatalysis; the sequence is MSEAETLKG. The active-site Nucleophile is the Thr-10.

Belongs to the peptidase T1B family. In terms of assembly, the 20S proteasome core is composed of 14 alpha and 14 beta subunits that assemble into four stacked heptameric rings, resulting in a barrel-shaped structure. The two inner rings, each composed of seven catalytic beta subunits, are sandwiched by two outer rings, each composed of seven alpha subunits. The catalytic chamber with the active sites is on the inside of the barrel. Has a gated structure, the ends of the cylinder being occluded by the N-termini of the alpha-subunits. Is capped at one or both ends by the proteasome regulatory ATPase, PAN.

It localises to the cytoplasm. The enzyme catalyses Cleavage of peptide bonds with very broad specificity.. Its activity is regulated as follows. The formation of the proteasomal ATPase PAN-20S proteasome complex, via the docking of the C-termini of PAN into the intersubunit pockets in the alpha-rings, triggers opening of the gate for substrate entry. Interconversion between the open-gate and close-gate conformations leads to a dynamic regulation of the 20S proteasome proteolysis activity. Component of the proteasome core, a large protease complex with broad specificity involved in protein degradation. This is Proteasome subunit beta from Methanosphaerula palustris (strain ATCC BAA-1556 / DSM 19958 / E1-9c).